Here is a 434-residue protein sequence, read N- to C-terminus: Enolase (434 aa).

Substrate-binding residues include histidine 158 and glutamate 167. The active-site Proton donor is glutamate 210. Mg(2+) contacts are provided by aspartate 245, glutamate 294, and aspartate 319. Substrate is bound by residues glutamate 294 and aspartate 319. The Proton acceptor role is filled by lysine 344. Residues 371-374 and lysine 395 each bind substrate; that span reads SHRS.

Belongs to the enolase family. As to quaternary structure, homodimer. The cofactor is Mg(2+).

It is found in the cytoplasm. It catalyses the reaction (2R)-2-phosphoglycerate = phosphoenolpyruvate + H2O. The protein operates within carbohydrate degradation; glycolysis; pyruvate from D-glyceraldehyde 3-phosphate: step 4/5. This chain is Enolase (ENO), found in Schistosoma japonicum (Blood fluke).